The primary structure comprises 833 residues: DNA ligase (833 aa).

NAD(+)-binding positions include 35–39, 84–85, and Glu115; these read DADYD and SL. The active-site N6-AMP-lysine intermediate is the Lys117. Residues Arg138, Glu175, Lys292, and Lys316 each contribute to the NAD(+) site. Zn(2+)-binding residues include Cys410, Cys413, Cys428, and Cys434. Positions 750–833 constitute a BRCT domain; it reads EKTGPLDGQT…AFLGDHGQQP (84 aa).

This sequence belongs to the NAD-dependent DNA ligase family. LigA subfamily. Mg(2+) is required as a cofactor. The cofactor is Mn(2+).

The enzyme catalyses NAD(+) + (deoxyribonucleotide)n-3'-hydroxyl + 5'-phospho-(deoxyribonucleotide)m = (deoxyribonucleotide)n+m + AMP + beta-nicotinamide D-nucleotide.. DNA ligase that catalyzes the formation of phosphodiester linkages between 5'-phosphoryl and 3'-hydroxyl groups in double-stranded DNA using NAD as a coenzyme and as the energy source for the reaction. It is essential for DNA replication and repair of damaged DNA. The polypeptide is DNA ligase (Xanthomonas axonopodis pv. citri (strain 306)).